We begin with the raw amino-acid sequence, 907 residues long: Protein translocase subunit SecA (907 aa).

Residues Gln-87, 105 to 109 (GEGKT), and Asp-512 each bind ATP. Zn(2+)-binding residues include Cys-891, Cys-893, Cys-902, and His-903.

Belongs to the SecA family. Monomer and homodimer. Part of the essential Sec protein translocation apparatus which comprises SecA, SecYEG and auxiliary proteins SecDF-YajC and YidC. Requires Zn(2+) as cofactor.

The protein localises to the cell inner membrane. The protein resides in the cytoplasm. It carries out the reaction ATP + H2O + cellular proteinSide 1 = ADP + phosphate + cellular proteinSide 2.. Functionally, part of the Sec protein translocase complex. Interacts with the SecYEG preprotein conducting channel. Has a central role in coupling the hydrolysis of ATP to the transfer of proteins into and across the cell membrane, serving both as a receptor for the preprotein-SecB complex and as an ATP-driven molecular motor driving the stepwise translocation of polypeptide chains across the membrane. The polypeptide is Protein translocase subunit SecA (Shewanella loihica (strain ATCC BAA-1088 / PV-4)).